Consider the following 565-residue polypeptide: Thiol:disulfide interchange protein DsbD (565 aa).

The signal sequence occupies residues 1-19; the sequence is MAQRIFTLILLLCSTSVFA. 2 disulfides stabilise this stretch: Cys-122-Cys-128 and Cys-182-Cys-304. 7 consecutive transmembrane segments (helical) span residues 163-183, 208-228, 243-263, 296-316, 323-343, 357-377, and 384-404; these read LPFS…TPCV, LLTF…GLVV, YVLI…FGLF, IAGL…LLYI, WLGG…LMLI, WMEQ…VFLL, and VWGL…AFIT. A Thioredoxin domain is found at 434–565; that stretch reads WAFGATHTAQ…FSAHLRDRQP (132 aa). Residues Cys-480 and Cys-483 are joined by a disulfide bond.

Belongs to the thioredoxin family. DsbD subfamily.

Its subcellular location is the cell inner membrane. The catalysed reaction is [protein]-dithiol + NAD(+) = [protein]-disulfide + NADH + H(+). It catalyses the reaction [protein]-dithiol + NADP(+) = [protein]-disulfide + NADPH + H(+). Its function is as follows. Required to facilitate the formation of correct disulfide bonds in some periplasmic proteins and for the assembly of the periplasmic c-type cytochromes. Acts by transferring electrons from cytoplasmic thioredoxin to the periplasm. This transfer involves a cascade of disulfide bond formation and reduction steps. In Shigella flexneri serotype 5b (strain 8401), this protein is Thiol:disulfide interchange protein DsbD.